The chain runs to 239 residues: Sugar fermentation stimulation protein homolog (239 aa).

This sequence belongs to the SfsA family.

This Desulforamulus reducens (strain ATCC BAA-1160 / DSM 100696 / MI-1) (Desulfotomaculum reducens) protein is Sugar fermentation stimulation protein homolog.